The primary structure comprises 60 residues: Large ribosomal subunit protein uL30 (60 aa).

This sequence belongs to the universal ribosomal protein uL30 family. As to quaternary structure, part of the 50S ribosomal subunit.

This is Large ribosomal subunit protein uL30 from Bacillus cereus (strain G9842).